The chain runs to 119 residues: uncharacterized protein (119 aa).

The N-terminal stretch at 1–18 is a signal peptide; it reads MPAVFMLASSSALQCGRG. The interval 23–100 is disordered; it reads PRTEVGAGHS…MFPGPLRGPA (78 aa). A compositionally biased stretch (polar residues) spans 43 to 71; sequence GNQTSVIPATSRQAALGTSWTQRRTQPLQ. Asn-44 is a glycosylation site (N-linked (GlcNAc...) asparagine).

The protein localises to the secreted. This is an uncharacterized protein from Homo sapiens (Human).